A 133-amino-acid chain; its full sequence is Holo-[acyl-carrier-protein] synthase (133 aa).

Mg(2+) contacts are provided by Asp8 and Glu57.

The protein belongs to the P-Pant transferase superfamily. AcpS family. The cofactor is Mg(2+).

Its subcellular location is the cytoplasm. The enzyme catalyses apo-[ACP] + CoA = holo-[ACP] + adenosine 3',5'-bisphosphate + H(+). In terms of biological role, transfers the 4'-phosphopantetheine moiety from coenzyme A to a Ser of acyl-carrier-protein. This chain is Holo-[acyl-carrier-protein] synthase, found in Bartonella tribocorum (strain CIP 105476 / IBS 506).